The primary structure comprises 264 residues: THAP domain-containing protein 10 (264 aa).

The THAP-type zinc-finger motif lies at 1–90 (MPARCVAAHC…LVAGAVPTLH (90 aa)). 2 disordered regions span residues 90–136 (HRVP…PRAG) and 160–195 (TQPH…KRPR). Basic and acidic residues predominate over residues 99 to 122 (GGEEGDQAGRPDTRGELQAARHSE). Polar residues predominate over residues 160–175 (TQPHADNPSNTVTSVP).

This Pongo abelii (Sumatran orangutan) protein is THAP domain-containing protein 10 (THAP10).